A 160-amino-acid chain; its full sequence is Putative 4-hydroxy-4-methyl-2-oxoglutarate aldolase (160 aa).

Residues 75-78 (GDQL) and R97 each bind substrate. A divalent metal cation is bound at residue D98.

The protein belongs to the class II aldolase/RraA-like family. In terms of assembly, homotrimer. The cofactor is a divalent metal cation.

The enzyme catalyses 4-hydroxy-4-methyl-2-oxoglutarate = 2 pyruvate. It carries out the reaction oxaloacetate + H(+) = pyruvate + CO2. Its function is as follows. Catalyzes the aldol cleavage of 4-hydroxy-4-methyl-2-oxoglutarate (HMG) into 2 molecules of pyruvate. Also contains a secondary oxaloacetate (OAA) decarboxylase activity due to the common pyruvate enolate transition state formed following C-C bond cleavage in the retro-aldol and decarboxylation reactions. This Vibrio vulnificus (strain YJ016) protein is Putative 4-hydroxy-4-methyl-2-oxoglutarate aldolase.